Consider the following 357-residue polypeptide: Queuosine-tRNA galactosyltransferase (357 aa).

This sequence belongs to the glycosyltransferase 2 family.

It is found in the cytoplasm. The catalysed reaction is queuosine(34) in tRNA(Tyr) + UDP-alpha-D-galactose = O-5''-beta-D-galactosylqueuosine(34) in tRNA(Tyr) + UDP + H(+). Its function is as follows. Glycosyltransferase that specifically catalyzes galactosylation of cytoplasmic tRNA(Tyr) modified with queuosine at position 34 (queuosine(34)). Galactosylates the cyclopentene hydroxyl group of queuosine(34) in tRNA(Tyr) to form galactosyl-queuosine(34). Mannosylation of queuosine(34) in tRNA(Tyr) is required to slow-down elongation at cognate codons UAC and suppress stop codon readthrough, thereby regulating protein translation. This is Queuosine-tRNA galactosyltransferase from Mus musculus (Mouse).